We begin with the raw amino-acid sequence, 129 residues long: Small ribosomal subunit protein uS8mz (129 aa).

It belongs to the universal ribosomal protein uS8 family. Component of the mitochondrial ribosome small subunit.

Its subcellular location is the mitochondrion. The polypeptide is Small ribosomal subunit protein uS8mz (RPS15AB) (Arabidopsis thaliana (Mouse-ear cress)).